The following is a 93-amino-acid chain: Parbolysin P2 (93 aa).

2 disulfides stabilise this stretch: C16-C37 and C22-C33.

This sequence belongs to the worm cytolysin family. Localized within the skin and proboscis and are most readily isolated from body mucus secretions.

Its subcellular location is the secreted. Functionally, cytolysin that shows hemolytic activity (on bovine erythrocytes, HC(50)=5.75 mg/ml). This hemolytic activity is completely inhibited by small unilamelar vesicles composed of PC/PG, PC/PI and PC/PS in 1:1 molar ratios (with at least 100 mg/ml concentration). In Parborlasia corrugatus (Antarctic nemertean worm), this protein is Parbolysin P2.